Consider the following 354-residue polypeptide: Rhodopsin (354 aa).

Residues 1–36 (MNGTEGPYFYVPMVNTTGIVRSPYEYPQYYLVSPAA) lie on the Extracellular side of the membrane. 2 N-linked (GlcNAc...) asparagine glycosylation sites follow: N2 and N15. Residues 37 to 61 (YACLGAYMFFLILVGFPINFLTLYV) traverse the membrane as a helical segment. Residues 62–73 (TIEHKKLRTPLN) lie on the Cytoplasmic side of the membrane. Residues 74-96 (YILLNLAVADLFMVFGGFTTTIY) traverse the membrane as a helical segment. Over 97–110 (TSMHGYFVLGRLGC) the chain is Extracellular. A disulfide bridge links C110 with C187. Residues 111–133 (NLEGYFATLGGEIGLWSLVVLAV) form a helical membrane-spanning segment. The 'Ionic lock' involved in activated form stabilization motif lies at 134 to 136 (ERW). Over 134–152 (ERWLVVCKPISNFRFSENH) the chain is Cytoplasmic. The helical transmembrane segment at 153-173 (AIMGLVFTWIMANSCAAPPLL) threads the bilayer. Over 174–202 (GWSRYIPEGMQCSCGVDYYTRAEGFNNES) the chain is Extracellular. A helical transmembrane segment spans residues 203–224 (FVIYMFICHFCIPLIVVFFCYG). Topologically, residues 225 to 252 (RLLCAVKEAAAAQQESETTQRAEREVTR) are cytoplasmic. Residues 253–274 (MVVIMVIGFLVCWIPYASVAWY) form a helical membrane-spanning segment. The Extracellular segment spans residues 275–286 (IFTHQGSEFGPL). A helical membrane pass occupies residues 287 to 308 (FMTVPAFFAKSASIYNPLIYIC). At K296 the chain carries N6-(retinylidene)lysine. Topologically, residues 309-354 (MNKQFRHCMITTLCCGKNPFEEEEGASTTASKTEASSVSSSSVSPA) are cytoplasmic. S-palmitoyl cysteine attachment occurs at residues C322 and C323. The disordered stretch occupies residues 333 to 354 (GASTTASKTEASSVSSSSVSPA). A compositionally biased stretch (low complexity) spans 334 to 354 (ASTTASKTEASSVSSSSVSPA).

It belongs to the G-protein coupled receptor 1 family. Opsin subfamily. In terms of processing, phosphorylated on some or all of the serine and threonine residues present in the C-terminal region. Post-translationally, contains one covalently linked retinal chromophore.

It is found in the membrane. Its subcellular location is the cell projection. The protein localises to the cilium. The protein resides in the photoreceptor outer segment. Its function is as follows. Photoreceptor required for image-forming vision at low light intensity. While most salt water fish species use retinal as chromophore, most freshwater fish use 3-dehydroretinal, or a mixture of retinal and 3-dehydroretinal. Light-induced isomerization of 11-cis to all-trans retinal triggers a conformational change that activates signaling via G-proteins. Subsequent receptor phosphorylation mediates displacement of the bound G-protein alpha subunit by arrestin and terminates signaling. In Poecilia reticulata (Guppy), this protein is Rhodopsin (rho).